Reading from the N-terminus, the 445-residue chain is uncharacterized protein (445 aa).

A disordered region spans residues threonine 139 to glutamine 160.

This is an uncharacterized protein from Mycoplasma pneumoniae (strain ATCC 29342 / M129 / Subtype 1) (Mycoplasmoides pneumoniae).